A 350-amino-acid polypeptide reads, in one-letter code: RING finger protein 44 (350 aa).

The segment at 298–339 adopts an RING-type; atypical zinc-finger fold; the sequence is CVVCFSDFEVRQLLRVLPCNHEFHAKCVDKWLKANRTCPICR.

The protein is RING finger protein 44 (Rnf44) of Rattus norvegicus (Rat).